The primary structure comprises 61 residues: Large ribosomal subunit protein bL28 (61 aa).

The interval 1 to 24 (MAKDYVTGKKTTFGNKRSHSLNPT) is disordered. Positions 9-23 (KKTTFGNKRSHSLNP) are enriched in polar residues.

This sequence belongs to the bacterial ribosomal protein bL28 family.

This is Large ribosomal subunit protein bL28 from Lactobacillus acidophilus (strain ATCC 700396 / NCK56 / N2 / NCFM).